The following is a 122-amino-acid chain: Phospholipase A2 homolog ECS_00014 (122 aa).

Intrachain disulfides connect cysteine 26–cysteine 115, cysteine 28–cysteine 44, cysteine 43–cysteine 95, cysteine 49–cysteine 122, cysteine 50–cysteine 88, cysteine 57–cysteine 81, and cysteine 75–cysteine 86. Positions 105 to 117 (KKYTYYPNFWCKG) are important for membrane-damaging activities in eukaryotes and bacteria; heparin-binding.

It belongs to the phospholipase A2 family. Group II subfamily. S49 sub-subfamily. Monomer. As to expression, expressed by the venom gland.

It localises to the secreted. Functionally, snake venom phospholipase A2 homolog that lacks enzymatic activity. Shows high myotoxin activities and displays edema-inducing activities. Has cytotoxic activities against HUVEC cells (LC(50)=12.2 uL) and human lung adenocarcinoma A549 cells (LC(50)=8.5 uL). This Echis carinatus sochureki (Saw-scaled viper) protein is Phospholipase A2 homolog ECS_00014.